A 142-amino-acid chain; its full sequence is Nucleoside diphosphate kinase (142 aa).

The ATP site is built by lysine 11, phenylalanine 59, arginine 87, threonine 93, arginine 104, and asparagine 114. The active-site Pros-phosphohistidine intermediate is histidine 117.

It belongs to the NDK family. As to quaternary structure, homotetramer. Mg(2+) is required as a cofactor.

It is found in the cytoplasm. It carries out the reaction a 2'-deoxyribonucleoside 5'-diphosphate + ATP = a 2'-deoxyribonucleoside 5'-triphosphate + ADP. The catalysed reaction is a ribonucleoside 5'-diphosphate + ATP = a ribonucleoside 5'-triphosphate + ADP. Its function is as follows. Major role in the synthesis of nucleoside triphosphates other than ATP. The ATP gamma phosphate is transferred to the NDP beta phosphate via a ping-pong mechanism, using a phosphorylated active-site intermediate. This chain is Nucleoside diphosphate kinase, found in Pectobacterium atrosepticum (strain SCRI 1043 / ATCC BAA-672) (Erwinia carotovora subsp. atroseptica).